The primary structure comprises 450 residues: Nicotinamide phosphoribosyltransferase (450 aa).

A diphosphate-binding site is contributed by arginine 210. Aspartate 233 contacts beta-nicotinamide D-ribonucleotide. 2 residues coordinate diphosphate: histidine 249 and arginine 310. Beta-nicotinamide D-ribonucleotide is bound by residues 310–312 (RAD), 364–365 (GD), and arginine 403.

This sequence belongs to the NAPRTase family.

The enzyme catalyses beta-nicotinamide D-ribonucleotide + diphosphate = 5-phospho-alpha-D-ribose 1-diphosphate + nicotinamide + H(+). Its pathway is cofactor biosynthesis; NAD(+) biosynthesis; nicotinamide D-ribonucleotide from 5-phospho-alpha-D-ribose 1-diphosphate and nicotinamide: step 1/1. Functionally, catalyzes the condensation of nicotinamide with 5-phosphoribosyl-1-pyrophosphate to yield nicotinamide mononucleotide, an intermediate in the biosynthesis of NAD. The chain is Nicotinamide phosphoribosyltransferase from Mycoplasma genitalium (strain ATCC 33530 / DSM 19775 / NCTC 10195 / G37) (Mycoplasmoides genitalium).